Here is a 210-residue protein sequence, read N- to C-terminus: ATP-dependent Clp protease proteolytic subunit (210 aa).

S106 serves as the catalytic Nucleophile. The active site involves H131.

Belongs to the peptidase S14 family. Fourteen ClpP subunits assemble into 2 heptameric rings which stack back to back to give a disk-like structure with a central cavity, resembling the structure of eukaryotic proteasomes.

It is found in the cytoplasm. It carries out the reaction Hydrolysis of proteins to small peptides in the presence of ATP and magnesium. alpha-casein is the usual test substrate. In the absence of ATP, only oligopeptides shorter than five residues are hydrolyzed (such as succinyl-Leu-Tyr-|-NHMec, and Leu-Tyr-Leu-|-Tyr-Trp, in which cleavage of the -Tyr-|-Leu- and -Tyr-|-Trp bonds also occurs).. Its function is as follows. Cleaves peptides in various proteins in a process that requires ATP hydrolysis. Has a chymotrypsin-like activity. Plays a major role in the degradation of misfolded proteins. This Afipia carboxidovorans (strain ATCC 49405 / DSM 1227 / KCTC 32145 / OM5) (Oligotropha carboxidovorans) protein is ATP-dependent Clp protease proteolytic subunit.